The primary structure comprises 506 residues: Glutamate--tRNA ligase (506 aa).

Positions 21 to 31 match the 'HIGH' region motif; sequence PSPTGTPHVGM. A 'KMSKS' region motif is present at residues 265 to 269; sequence KLSKR. ATP is bound at residue Lys268.

This sequence belongs to the class-I aminoacyl-tRNA synthetase family. Glutamate--tRNA ligase type 1 subfamily. As to quaternary structure, monomer.

It is found in the cytoplasm. The catalysed reaction is tRNA(Glu) + L-glutamate + ATP = L-glutamyl-tRNA(Glu) + AMP + diphosphate. In terms of biological role, catalyzes the attachment of glutamate to tRNA(Glu) in a two-step reaction: glutamate is first activated by ATP to form Glu-AMP and then transferred to the acceptor end of tRNA(Glu). This chain is Glutamate--tRNA ligase, found in Bifidobacterium longum (strain DJO10A).